The sequence spans 32 residues: Enolase (32 aa).

This sequence belongs to the enolase family. Homodimer. The cofactor is Mg(2+).

Its subcellular location is the cytoplasm. It catalyses the reaction (2R)-2-phosphoglycerate = phosphoenolpyruvate + H2O. Its pathway is carbohydrate degradation; glycolysis; pyruvate from D-glyceraldehyde 3-phosphate: step 4/5. The protein is Enolase of Imperata cylindrica (Cogon grass).